Consider the following 459-residue polypeptide: Ribulose bisphosphate carboxylase large chain (459 aa).

N6,N6,N6-trimethyllysine is present on Lys4. 2 residues coordinate substrate: Asn113 and Thr163. The Proton acceptor role is filled by Lys165. Lys167 contacts substrate. Residues Lys191, Asp193, and Glu194 each contribute to the Mg(2+) site. The residue at position 191 (Lys191) is an N6-carboxylysine. The Proton acceptor role is filled by His284. The substrate site is built by Arg285, His317, and Ser369.

This sequence belongs to the RuBisCO large chain family. Type I subfamily. In terms of assembly, heterohexadecamer of 8 large chains and 8 small chains; disulfide-linked. The disulfide link is formed within the large subunit homodimers. It depends on Mg(2+) as a cofactor. The disulfide bond which can form in the large chain dimeric partners within the hexadecamer appears to be associated with oxidative stress and protein turnover.

The protein resides in the plastid. Its subcellular location is the chloroplast. The catalysed reaction is 2 (2R)-3-phosphoglycerate + 2 H(+) = D-ribulose 1,5-bisphosphate + CO2 + H2O. The enzyme catalyses D-ribulose 1,5-bisphosphate + O2 = 2-phosphoglycolate + (2R)-3-phosphoglycerate + 2 H(+). Its function is as follows. RuBisCO catalyzes two reactions: the carboxylation of D-ribulose 1,5-bisphosphate, the primary event in carbon dioxide fixation, as well as the oxidative fragmentation of the pentose substrate in the photorespiration process. Both reactions occur simultaneously and in competition at the same active site. The protein is Ribulose bisphosphate carboxylase large chain of Ceratopetalum gummiferum (New South Wales Christmas bush).